Here is a 180-residue protein sequence, read N- to C-terminus: Adipocyte-related X-chromosome expressed sequence 1 (180 aa).

Residues 1–11 (MNSLLSRANSL) lie on the Cytoplasmic side of the membrane. A helical; Signal-anchor for type II membrane protein membrane pass occupies residues 12-32 (FAFTLSVMAALTLGCILTTAF). Residues 33–180 (KDRSAPVRLH…PDSYEIATTF (148 aa)) lie on the Lumenal side of the membrane. Asparagine 141 carries N-linked (GlcNAc...) asparagine glycosylation.

It belongs to the SPCS3 family. Strongly expressed in epididymal white and brown adipose tissue with low levels in heart.

Its subcellular location is the endoplasmic reticulum membrane. Plays a role in adipogenesis. In Mus musculus (Mouse), this protein is Adipocyte-related X-chromosome expressed sequence 1.